A 217-amino-acid polypeptide reads, in one-letter code: MNLAAIAKNYSMHNGESEAIVPYVPPPYNFASAPTFSQRTSQMESVSLGILNQAMSSTTGASGALKDEKAAFGAMAEALRDPEPIRQIKKQVGIRTLKNLKMELATMRRKKSALKIMIFISGCVTLATSMVGGLSIVDDEILRDYKNNDWLMKTIHGLNLLCTTVLLAAGKISDKIQEEISRTKRDIAKRESYVSAASMSWNGDTEMLLQGIKYGES.

This sequence belongs to the orbivirus NS3 family.

In terms of biological role, may play a role in the release of virions from infected cells. The polypeptide is Non-structural protein NS3 (Segment-10) (African horse sickness virus 6 (AHSV-6)).